The primary structure comprises 336 residues: COP9 signalosome complex subunit 5 (336 aa).

The MPN domain occupies 44 to 181; the sequence is VRISSVAMIK…IGAFRTIPEG (138 aa). Zn(2+)-binding residues include His-127, His-129, and Asp-140. The short motif at 127–140 is the JAMM motif element; the sequence is HSHPGYGCWLSGID.

It belongs to the peptidase M67A family. CSN5 subfamily. As to quaternary structure, component of the COP9 signalosome (CSN) complex.

Its subcellular location is the cytoplasm. The protein resides in the nucleus. Catalytic component of the COP9 signalosome (CSN) complex that acts as an regulator of the ubiquitin (Ubl) conjugation pathway by mediating the deneddylation of the cullin subunit of SCF-type E3 ubiquitin-protein ligase complexes. The CSN complex is involved in the regulation of the circadian clock through its control of the stability of the SCF(FWD-1) complex. The chain is COP9 signalosome complex subunit 5 (csn-5) from Neurospora crassa (strain ATCC 24698 / 74-OR23-1A / CBS 708.71 / DSM 1257 / FGSC 987).